The chain runs to 396 residues: Phosphoglycerate kinase (396 aa).

Substrate-binding positions include 21 to 23, Arg36, 59 to 62, Arg118, and Arg151; these read DIN and HFGR. Residues Lys201, Glu323, and 353–356 each bind ATP; that span reads GGDT.

This sequence belongs to the phosphoglycerate kinase family. In terms of assembly, monomer.

The protein resides in the cytoplasm. It carries out the reaction (2R)-3-phosphoglycerate + ATP = (2R)-3-phospho-glyceroyl phosphate + ADP. Its pathway is carbohydrate degradation; glycolysis; pyruvate from D-glyceraldehyde 3-phosphate: step 2/5. This Ruegeria sp. (strain TM1040) (Silicibacter sp.) protein is Phosphoglycerate kinase.